Reading from the N-terminus, the 371-residue chain is Glycosyltransferase 8 domain-containing protein 1 (371 aa).

The Cytoplasmic segment spans residues 1-7 (MSFRKVN). A helical; Signal-anchor for type II membrane protein membrane pass occupies residues 8–28 (IIILVLAVALFLLVLHHNFLS). The Lumenal portion of the chain corresponds to 29-371 (LSSLLRNEVT…RRYTEISNIK (343 aa)). N-linked (GlcNAc...) asparagine glycosylation is found at asparagine 249 and asparagine 257.

The protein belongs to the glycosyltransferase 8 family.

The protein localises to the membrane. The chain is Glycosyltransferase 8 domain-containing protein 1 (GLT8D1) from Homo sapiens (Human).